Here is a 398-residue protein sequence, read N- to C-terminus: Acetate kinase (398 aa).

Asn8 provides a ligand contact to Mg(2+). Lys15 serves as a coordination point for ATP. Arg89 lines the substrate pocket. Catalysis depends on Asp146, which acts as the Proton donor/acceptor. ATP contacts are provided by residues 206–210 (HIGNG), 283–285 (DMR), and 331–335 (GMGEN). Glu383 serves as a coordination point for Mg(2+).

This sequence belongs to the acetokinase family. In terms of assembly, homodimer. Mg(2+) serves as cofactor. It depends on Mn(2+) as a cofactor.

It is found in the cytoplasm. The catalysed reaction is acetate + ATP = acetyl phosphate + ADP. It participates in metabolic intermediate biosynthesis; acetyl-CoA biosynthesis; acetyl-CoA from acetate: step 1/2. Functionally, catalyzes the formation of acetyl phosphate from acetate and ATP. Can also catalyze the reverse reaction. This chain is Acetate kinase, found in Streptococcus pyogenes serotype M28 (strain MGAS6180).